The following is a 436-amino-acid chain: Transcription termination factor Rho (436 aa).

The 76-residue stretch at 65 to 140 folds into the Rho RNA-BD domain; that stretch reads LVFVKGVLEI…IRMESVNGLP (76 aa). Residues 185–190, 197–202, and arginine 228 each bind ATP; these read GKGQRG and KAGKTV.

Belongs to the Rho family. In terms of assembly, homohexamer. The homohexamer assembles into an open ring structure.

Its function is as follows. Facilitates transcription termination by a mechanism that involves Rho binding to the nascent RNA, activation of Rho's RNA-dependent ATPase activity, and release of the mRNA from the DNA template. The sequence is that of Transcription termination factor Rho from Aquifex aeolicus (strain VF5).